Reading from the N-terminus, the 496-residue chain is Cyclin-dependent kinase 16 (496 aa).

Residues 1 to 95 (MDRMKKIKRQ…SATSSDEVQS (95 aa)) are disordered. Ser12 is subject to Phosphoserine; by BRSK2. Phosphoserine occurs at positions 36, 42, 64, 65, 78, 82, and 89. The segment covering 69–78 (IVHEDMKMGS) has biased composition (basic and acidic residues). Positions 83 to 93 (DQASATSSDEV) are enriched in polar residues. The residue at position 95 (Ser95) is a Phosphoserine; by CDK5. 6 positions are modified to phosphoserine: Ser110, Ser119, Ser138, Ser146, Ser153, and Ser155. A Protein kinase domain is found at 165–446 (YIKLDKLGEG…AEDARKHPFF (282 aa)). Residues 171-179 (LGEGTYATV) and Lys194 contribute to the ATP site. Thr175 carries the phosphothreonine modification. The active-site Proton acceptor is Asp286. A Phosphothreonine modification is found at Thr380. Ser391, Ser478, and Ser480 each carry phosphoserine.

It belongs to the protein kinase superfamily. CMGC Ser/Thr protein kinase family. CDC2/CDKX subfamily. As to quaternary structure, found in a complex containing CABLES1, CDK17 and TDRD7. Interacts with BRSK2. Identified in a complex with NSF, syntaxin-1, synaptotagmin, SYN1, SYP and CDK5R1. Interacts with YWHAH, YWHAQ and YWHAZ. Interacts with CCNY; this interaction increases the CDK16 kinase activity. Interacts with CCNYL1; this interaction mutually increases the stability of CDK16 and CCNYL1 and increases the kinase activity of CDK16. Interacts with NSF. In terms of processing, phosphorylation of CDK16 is essential for the binding of CCNY, but also essential for the regulation of CDK16 kinase activity. Phosphorylation of CDK16 is essential for the binding of CCNYl1, but also essential for the regulation of CDK16 kinase activity. Ser-146 and Ser-153 are the critical sites for the binding of CCNYL1 and for modulating CDK16 kinase activity. Phosphorylation at Ser-153 inhibits kinase activity. Highly expressed in testis and brain, and detected at lower levels in heart, skeletal muscle, adipose tissue, lung, spleen and pancreas (at protein level). Ubiquitous with highest levels in testis and brain, with longer form predominant in all tissues except the testis.

It localises to the cytoplasm. The protein resides in the cytoplasmic vesicle. It is found in the secretory vesicle. Its subcellular location is the cell membrane. The protein localises to the synapse. It localises to the synaptosome. It catalyses the reaction L-seryl-[protein] + ATP = O-phospho-L-seryl-[protein] + ADP + H(+). It carries out the reaction L-threonyl-[protein] + ATP = O-phospho-L-threonyl-[protein] + ADP + H(+). Protein kinase that plays a role in vesicle-mediated transport processes and exocytosis. Can phosphorylate CCNY at 'Ser-336' (in vitro). Plays a role in the regulation of insulin secretion in response to changes in blood glucose levels. Regulates GH1 release by brain neurons. Phosphorylates NSF, and thereby regulates NSF oligomerization. Required for normal spermatogenesis. Regulates neuron differentiation and dendrite development. This chain is Cyclin-dependent kinase 16 (Cdk16), found in Mus musculus (Mouse).